The following is a 394-amino-acid chain: Flap endonuclease 1 (394 aa).

The interval 1–103 is N-domain; the sequence is MGIKSLYQII…GELAKRTMRK (103 aa). Aspartate 34 is a binding site for Mg(2+). Arginine 69 is a DNA binding site. Position 85 (aspartate 85) interacts with Mg(2+). Positions 102–123 are disordered; the sequence is RKAEAQEAAEEAKETGTAEDVE. Positions 121 to 252 are I-domain; the sequence is DVEKFSRRTV…NTALKMIRDH (132 aa). Residues glutamate 157, glutamate 159, aspartate 178, and aspartate 180 each coordinate Mg(2+). Glutamate 157 contacts DNA. DNA contacts are provided by glycine 230 and aspartate 232. A Mg(2+)-binding site is contributed by aspartate 232. Residues 340–348 form an interaction with PCNA region; that stretch reads QQSRLEGFF. The disordered stretch occupies residues 349–394; it reads KPVAKTEQQKATAKRKAEEKAELAKKKKKEDAKAKRAMGAKPRGAR. The segment covering 363–382 has biased composition (basic and acidic residues); the sequence is RKAEEKAELAKKKKKEDAKA. Residues 383–394 are compositionally biased toward basic residues; that stretch reads KRAMGAKPRGAR.

The protein belongs to the XPG/RAD2 endonuclease family. FEN1 subfamily. In terms of assembly, interacts with PCNA. Three molecules of FEN1 bind to one PCNA trimer with each molecule binding to one PCNA monomer. PCNA stimulates the nuclease activity without altering cleavage specificity. Mg(2+) is required as a cofactor. Phosphorylated. Phosphorylation upon DNA damage induces relocalization to the nuclear plasma.

It is found in the nucleus. The protein localises to the nucleolus. The protein resides in the nucleoplasm. Its subcellular location is the mitochondrion. Functionally, structure-specific nuclease with 5'-flap endonuclease and 5'-3' exonuclease activities involved in DNA replication and repair. During DNA replication, cleaves the 5'-overhanging flap structure that is generated by displacement synthesis when DNA polymerase encounters the 5'-end of a downstream Okazaki fragment. It enters the flap from the 5'-end and then tracks to cleave the flap base, leaving a nick for ligation. Also involved in the long patch base excision repair (LP-BER) pathway, by cleaving within the apurinic/apyrimidinic (AP) site-terminated flap. Acts as a genome stabilization factor that prevents flaps from equilibrating into structures that lead to duplications and deletions. Also possesses 5'-3' exonuclease activity on nicked or gapped double-stranded DNA, and exhibits RNase H activity. Also involved in replication and repair of rDNA and in repairing mitochondrial DNA. This Arthroderma otae (strain ATCC MYA-4605 / CBS 113480) (Microsporum canis) protein is Flap endonuclease 1.